We begin with the raw amino-acid sequence, 458 residues long: V-type sodium ATPase subunit B (458 aa).

It belongs to the ATPase alpha/beta chains family.

Involved in ATP-driven sodium extrusion. The protein is V-type sodium ATPase subunit B (ntpB) of Enterococcus hirae (strain ATCC 9790 / DSM 20160 / JCM 8729 / LMG 6399 / NBRC 3181 / NCIMB 6459 / NCDO 1258 / NCTC 12367 / WDCM 00089 / R).